Here is a 96-residue protein sequence, read N- to C-terminus: Large ribosomal subunit protein uL23 (96 aa).

The protein belongs to the universal ribosomal protein uL23 family. Part of the 50S ribosomal subunit. Contacts protein L29, and trigger factor when it is bound to the ribosome.

Functionally, one of the early assembly proteins it binds 23S rRNA. One of the proteins that surrounds the polypeptide exit tunnel on the outside of the ribosome. Forms the main docking site for trigger factor binding to the ribosome. The polypeptide is Large ribosomal subunit protein uL23 (Nitratidesulfovibrio vulgaris (strain DSM 19637 / Miyazaki F) (Desulfovibrio vulgaris)).